The sequence spans 811 residues: Transmembrane protease serine 6 (811 aa).

Residues 1–55 are Cytoplasmic-facing; sequence MLLLFHSKRMPVAEAPQVAGGQGDGGDGEEAEPEGMFKACEDSKRKARGYLRLVP. A helical; Signal-anchor for type II membrane protein membrane pass occupies residues 56–76; sequence LFVLLALLVLASAGVLLWYFL. Residues 77-811 are Extracellular-facing; the sequence is GYKAEVMVSQ…VISWIQQVVT (735 aa). In terms of domain architecture, SEA spans 84-209; sequence VSQVYSGSLR…EGLVILEASV (126 aa). N-linked (GlcNAc...) asparagine glycosylation is found at Asn-136, Asn-184, Asn-216, Asn-338, Asn-433, and Asn-453. 2 consecutive CUB domains span residues 213-336 and 335-452; these read AALN…QACE and CEVN…YGLY. Cys-335 and Cys-366 form a disulfide bridge. LDL-receptor class A domains follow at residues 457 to 489, 490 to 526, and 530 to 567; these read PCPGEFLCSVNGLCVPACDGVKDCPNGLDERNC, VCRATFQCKEDSTCISLPKVCDGQPDCLNGSDEEQCQ, and PCGTFTFQCEDRSCVKKPNPQCDGRPDCRDGSDEEHCD. Intrachain disulfides connect Cys-458–Cys-470, Cys-464–Cys-480, Cys-474–Cys-489, Cys-491–Cys-503, Cys-497–Cys-516, Cys-510–Cys-525, Cys-531–Cys-543, Cys-538–Cys-557, Cys-551–Cys-566, and Cys-602–Cys-618. Residue Asn-518 is glycosylated (N-linked (GlcNAc...) asparagine). The Peptidase S1 domain occupies 577 to 811; sequence IVGGAVSSEG…VISWIQQVVT (235 aa). Active-site charge relay system residues include His-617 and Asp-668. Disulfide bonds link Cys-702/Cys-768, Cys-733/Cys-747, and Cys-758/Cys-787. Residue Ser-762 is the Charge relay system of the active site.

The protein belongs to the peptidase S1 family. As to quaternary structure, interacts with HJV. In terms of processing, the single-chain zymogen undergoes autoproteolytic processing. This results in TMPRSS6 shedding from the cell surface and conversion into an activated two-chains form which is released extracellularly. The process involves a trans-activation mechanism that requires TMPRSS6 oligomerization.

It localises to the cell membrane. Membrane-bound serine protease. Through the cleavage of cell surface hemojuvelin (HJV), a regulator of the expression of the iron absorption-regulating hormone hepicidin/HAMP, plays a role in iron homeostasis. The polypeptide is Transmembrane protease serine 6 (TMPRSS6) (Homo sapiens (Human)).